The following is a 583-amino-acid chain: MPVTDRSVPSLLQERADQQPDSTAYTYIDYGSDPKGFADSLTWSQVYSRACIIAEELKLCGLPGDRVAVLAPQGLEYVLAFLGALQAGFIAVPLSTPQYGIHDDRVSAVLQDSKPVAILTTSSVVGDVTKYAASHDGQPAPVVVEVDLLDLDSPRQMPAFSRQHTGAAYLQYTSGSTRTPAGVIVSHTNVIANVTQSMYGYFGDPAKIPTGTVVSWLPLYHDMGLILGICAPLVARRRAMLMSPMSFLRRPARWMQLLATSGRCFSAAPNFAFELAVRRTSDQDMAGLDLRDVVGIVSGSERIHVATVRRFIERFAPYNLSPTAIRPSYGLAEATLYVAAPEAGAAPKTVRFDYEQLTAGQARPCGTDGSVGTELISYGSPDPSSVRIVNPETMVENPPGVVGEIWVHGDHVTMGYWQKPKQTAQVFDAKLVDPAPAAPEGPWLRTGDLGVISDGELFIMGRIKDLLIVDGRNHYPDDIEATIQEITGGRAAAIAVPDDITEQLVAIIEFKRRGSTAEEVMLKLRSVKREVTSAISKSHSLRVADLVLVSPGSIPITTSGKIRRSACVERYRSDGFKRLDVAV.

This sequence belongs to the ATP-dependent AMP-binding enzyme family.

It carries out the reaction holo-[(phenol)carboxyphthiodiolenone synthase] + a long-chain fatty acid + ATP = a long-chain fatty acyl-[(phenol)carboxyphthiodiolenone synthase] + AMP + diphosphate. The catalysed reaction is eicosanoate + holo-[(phenol)carboxyphthiodiolenone synthase] + ATP = icosanoyl-[(phenol)carboxyphthiodiolenone synthase] + AMP + diphosphate. It catalyses the reaction holo-[(phenol)carboxyphthiodiolenone synthase] + docosanoate + ATP = docosanoyl-[(phenol)carboxyphthiodiolenone synthase] + AMP + diphosphate. The protein operates within lipid metabolism; fatty acid biosynthesis. Catalyzes the activation of long-chain fatty acids as acyl-adenylates (acyl-AMP), which are then transferred to the multifunctional polyketide synthase PpsA for further chain extension. Catalyzes the adenylation of the long-chain fatty acids eicosanoate (C20) or docosanoate (C22), and potentially the very-long-chain fatty acid lignocerate (C24). Involved in the biosynthesis of phthiocerol dimycocerosate (DIM A) and phthiodiolone dimycocerosate (DIM B). The polypeptide is Long-chain-fatty-acid--AMP ligase FadD26 (fadD26) (Mycobacterium tuberculosis (strain CDC 1551 / Oshkosh)).